A 910-amino-acid chain; its full sequence is DnaJ-like protein MG200 homolog (910 aa).

A J domain is found at 4 to 73 (AKRDYYEVLG…RANYDKYGHD (70 aa)). Disordered stretches follow at residues 102-160 (DNLS…DDIP), 260-408 (TEPS…LEQD), and 451-486 (VLSDQNPNPQTPTHHEEDAAAPEPTVDETSGESTAP). The segment covering 111–121 (KKEKTKTKKKG) has biased composition (basic residues). Residues 273-283 (DSDAVTAATTV) are compositionally biased toward low complexity. A compositionally biased stretch (acidic residues) spans 357–379 (SDEADATNEPTEQDTISEPEQET). Residues 451 to 462 (VLSDQNPNPQTP) are compositionally biased toward polar residues.

The polypeptide is DnaJ-like protein MG200 homolog (Mycoplasma pneumoniae (strain ATCC 29342 / M129 / Subtype 1) (Mycoplasmoides pneumoniae)).